Here is a 353-residue protein sequence, read N- to C-terminus: MAIDENKQKALAAALGQIEKQFGKGSIMRLGEDRSMDVETISTGSLSLDIALGAGGLPMGRIVEIYGPESSGKTTLTLQVIAAAQLEGKTCAFIDAEHALDPIYARKLGVDIDNLLCSQPDTGEQALEICDALARSGAVDVIVVDSVAALTPKAEIEGEIGDSHMGLAARMMSQAMRKLAGNLKQSNTLLIFINQIRMKIGVMFGNPETTTGGNALKFYASVRLDIRRIGAVKEGENVVGSETRVKVVKNKIAAPFKQAEFQILYGEGINFYGELVDLGVKEKLIEKAGAWYSYKGEKIGQGKANATAWLKDNPETAKEIEKKVRELLLSNPNSTPDFSVDDSEGVAETNEDF.

ATP is bound at residue 67-74 (GPESSGKT). The segment at 330 to 353 (SNPNSTPDFSVDDSEGVAETNEDF) is disordered. The span at 339 to 353 (SVDDSEGVAETNEDF) shows a compositional bias: acidic residues.

The protein belongs to the RecA family.

It localises to the cytoplasm. Can catalyze the hydrolysis of ATP in the presence of single-stranded DNA, the ATP-dependent uptake of single-stranded DNA by duplex DNA, and the ATP-dependent hybridization of homologous single-stranded DNAs. It interacts with LexA causing its activation and leading to its autocatalytic cleavage. This chain is Protein RecA, found in Shigella sonnei.